We begin with the raw amino-acid sequence, 256 residues long: Type II phosphatidylinositol 4,5-bisphosphate 4-phosphatase (256 aa).

Over residues 1–10 the composition is skewed to basic and acidic residues; that stretch reads MAADGIDERS. A disordered region spans residues 1–25; that stretch reads MAADGIDERSPLISPSSGNVTPTAP. Residues 13 to 22 show a composition bias toward polar residues; sequence ISPSSGNVTP. The active site involves C106. A CX5R motif motif is present at residues 106-112; the sequence is CKDISRR. A run of 2 helical transmembrane segments spans residues 191 to 211 and 226 to 246; these read CCTYITMGMICIFIGVGLTVG and WAVAYLVGLVCLVRACYWGAI.

The protein localises to the late endosome membrane. Its subcellular location is the lysosome membrane. The catalysed reaction is a 1,2-diacyl-sn-glycero-3-phospho-(1D-myo-inositol-4,5-bisphosphate) + H2O = a 1,2-diacyl-sn-glycero-3-phospho-(1D-myo-inositol-5-phosphate) + phosphate. Its function is as follows. Catalyzes the hydrolysis of phosphatidylinositol-4,5-bisphosphate (PtdIns-4,5-P2) to phosphatidylinositol-4-phosphate (PtdIns-4-P). In Xenopus laevis (African clawed frog), this protein is Type II phosphatidylinositol 4,5-bisphosphate 4-phosphatase.